The primary structure comprises 735 residues: MIPNTPSITPELVAEHGLKPDEYQRFVELIGREPTITELGIVSAMWNEHCSYKSSKVWLRTLPTKGPRVIQGPGENAGVVDIGDGLAVVFKMESHNHPSFIEPYQGAGTGVGGILRDVFTMGARPIAALNALRFGDPHHPRTRRLLAGVVAGIGGYGNSFGVPTVGGSVGFHERYNGNILVNAMAVGLAKTDEIFYAAAAGVGRSIVYLGSKTGRDGIHGATMASAEFGADAEEKRPTVQVGDPFAEKLLLEACLEIMQAGCVVAIQDMGAAGLTCSAVEMGAKGDLGVELDLNAVPCRETGMTAYEMMLSESQERMLMVIADGKEDQAEAIFRKWGLDFAIIGKTTDTLRFVVKHDGDVKADLPIKELGDEAPEYYRPFTETPPRPVLGPSDVNHAVSVADALERLIASPDLCSKRWVWEQYDHLILGNTVQRPGGDAAVVRVNEGPKALALTTDVTPRYCEADPFEGGKQAVAEAWRNLTAVGATPIAVTDNLNFGNPEKPEIMGQFVGCVKGIGAACEALDFPVVSGNVSLYNETNGQGILPTPTIGGVGLIDDVEQSMTLAFKAAGEAIFVVGKTDGWLGSSAYLYTVCDREDGAPPPVDLVAEKRNGDFVRGLIKDDFITAAHDVSDGGLLVAIAEMAMAGRIGASVDGVPAGMPAHSFWFGEDQARYVVTLPANQAAEMVRRAEAAGVPVTKLGKTGGDKITLANERPIFVEGLRDRHDSWLPIYMGAN.

H49 is an active-site residue. Residues Y52 and K91 each contribute to the ATP site. E93 serves as a coordination point for Mg(2+). Substrate-binding positions include 94 to 97 and R116; that span reads SHNH. The active-site Proton acceptor is the H95. D117 is a binding site for Mg(2+). Q240 contributes to the substrate binding site. D268 is a Mg(2+) binding site. Substrate is bound at residue 312–314; the sequence is ESQ. Positions 493 and 530 each coordinate ATP. N531 serves as a coordination point for Mg(2+). S533 is a substrate binding site.

The protein belongs to the FGAMS family. As to quaternary structure, monomer. Part of the FGAM synthase complex composed of 1 PurL, 1 PurQ and 2 PurS subunits.

The protein resides in the cytoplasm. The catalysed reaction is N(2)-formyl-N(1)-(5-phospho-beta-D-ribosyl)glycinamide + L-glutamine + ATP + H2O = 2-formamido-N(1)-(5-O-phospho-beta-D-ribosyl)acetamidine + L-glutamate + ADP + phosphate + H(+). Its pathway is purine metabolism; IMP biosynthesis via de novo pathway; 5-amino-1-(5-phospho-D-ribosyl)imidazole from N(2)-formyl-N(1)-(5-phospho-D-ribosyl)glycinamide: step 1/2. In terms of biological role, part of the phosphoribosylformylglycinamidine synthase complex involved in the purines biosynthetic pathway. Catalyzes the ATP-dependent conversion of formylglycinamide ribonucleotide (FGAR) and glutamine to yield formylglycinamidine ribonucleotide (FGAM) and glutamate. The FGAM synthase complex is composed of three subunits. PurQ produces an ammonia molecule by converting glutamine to glutamate. PurL transfers the ammonia molecule to FGAR to form FGAM in an ATP-dependent manner. PurS interacts with PurQ and PurL and is thought to assist in the transfer of the ammonia molecule from PurQ to PurL. The polypeptide is Phosphoribosylformylglycinamidine synthase subunit PurL (Azorhizobium caulinodans (strain ATCC 43989 / DSM 5975 / JCM 20966 / LMG 6465 / NBRC 14845 / NCIMB 13405 / ORS 571)).